Reading from the N-terminus, the 526-residue chain is GMP synthase [glutamine-hydrolyzing] (526 aa).

A Glutamine amidotransferase type-1 domain is found at 4–202; it reads KILILDFGSQ…VHDICGCDQS (199 aa). Catalysis depends on Cys81, which acts as the Nucleophile. Active-site residues include His176 and Glu178. The GMPS ATP-PPase domain occupies 203–395; sequence WNMPDYVETA…LGLPHDMVYR (193 aa). 230-236 contributes to the ATP binding site; that stretch reads SGGVDSS.

In terms of assembly, homodimer.

It carries out the reaction XMP + L-glutamine + ATP + H2O = GMP + L-glutamate + AMP + diphosphate + 2 H(+). It functions in the pathway purine metabolism; GMP biosynthesis; GMP from XMP (L-Gln route): step 1/1. Its function is as follows. Catalyzes the synthesis of GMP from XMP. This chain is GMP synthase [glutamine-hydrolyzing], found in Methylobacillus flagellatus (strain ATCC 51484 / DSM 6875 / VKM B-1610 / KT).